The following is a 72-amino-acid chain: Hypotensin (72 aa).

A signal peptide spans 1 to 24; sequence MKMMIAVFVSILLLMFSLSSTAMG. Propeptides lie at residues 25 to 35 and 61 to 72; these read METEQQNMEER and RFDPATFGENED.

It belongs to the non-disulfide-bridged peptide (NDBP) superfamily. In terms of tissue distribution, expressed by the venom gland.

It localises to the secreted. Functionally, potentiates the hypotensive action of bradykinin (BK) in normotensive rats, and induces a vasorelaxant effect in mesenteric artery rings that is induced by endothelium-dependent release of nitric oxide (NO). Does not inhibit angiotensin converting enzyme (ACE). Shows neither hemolytic activity nor cytotoxicity to normal and cancer cells. Shows moderate antimicrobial activity against the fungi Candida albicans and the filamentous fungus Trichophyton rubrum, as well as against the bacteria C.albicans (MIC=128 ug/mL), C.tropicalis (MIC=128 ug/mL) and Aspergillus flavus (MIC=128 ug/mL). Has no antimicrobial activity against S.aureus, S.epidermidis and P.aeruginosa. This is Hypotensin from Tityus stigmurus (Brazilian scorpion).